Consider the following 259-residue polypeptide: Ribosomal RNA small subunit methyltransferase J (259 aa).

Residues 101-102 (RD), 117-118 (ER), 153-154 (SS), and aspartate 176 each bind S-adenosyl-L-methionine.

Belongs to the methyltransferase superfamily. RsmJ family.

Its subcellular location is the cytoplasm. The catalysed reaction is guanosine(1516) in 16S rRNA + S-adenosyl-L-methionine = N(2)-methylguanosine(1516) in 16S rRNA + S-adenosyl-L-homocysteine + H(+). In terms of biological role, specifically methylates the guanosine in position 1516 of 16S rRNA. This Aliivibrio fischeri (strain ATCC 700601 / ES114) (Vibrio fischeri) protein is Ribosomal RNA small subunit methyltransferase J.